Here is a 602-residue protein sequence, read N- to C-terminus: Elongation factor 4 (602 aa).

Positions 8–190 (DLIRNFSIVA…AIVHRLPPPK (183 aa)) constitute a tr-type G domain. Residues 20-25 (DHGKST) and 137-140 (NKID) contribute to the GTP site.

The protein belongs to the TRAFAC class translation factor GTPase superfamily. Classic translation factor GTPase family. LepA subfamily.

It localises to the cell inner membrane. The enzyme catalyses GTP + H2O = GDP + phosphate + H(+). Required for accurate and efficient protein synthesis under certain stress conditions. May act as a fidelity factor of the translation reaction, by catalyzing a one-codon backward translocation of tRNAs on improperly translocated ribosomes. Back-translocation proceeds from a post-translocation (POST) complex to a pre-translocation (PRE) complex, thus giving elongation factor G a second chance to translocate the tRNAs correctly. Binds to ribosomes in a GTP-dependent manner. The chain is Elongation factor 4 from Cereibacter sphaeroides (strain ATCC 17023 / DSM 158 / JCM 6121 / CCUG 31486 / LMG 2827 / NBRC 12203 / NCIMB 8253 / ATH 2.4.1.) (Rhodobacter sphaeroides).